Here is a 647-residue protein sequence, read N- to C-terminus: Endogenous retrovirus group K member 8 Gag polyprotein (647 aa).

G2 carries N-myristoyl glycine lipidation. The tract at residues 165–264 (GKGPELVGPS…APPSRQGSEL (100 aa)) is disordered. Residues 232–247 (GMPPAPQGREPYPQPP) are compositionally biased toward pro residues. 2 CCHC-type zinc fingers span residues 544-561 (GKCY…NCPV) and 580-597 (DLCP…QCRS). A disordered region spans residues 598–641 (KFDKNGQPLSGNEQRGQPQAPQQTGAFPIQPFVPQGFQDNNPHC). The segment covering 604 to 622 (QPLSGNEQRGQPQAPQQTG) has biased composition (polar residues).

This sequence belongs to the beta type-B retroviral Gag protein family. HERV class-II K(HML-2) gag subfamily. Myristoylation is essential for retroviral assembly. Alteration of the glycine residue leads to a block in the budding of particles and an accumulation of Gag inside the cell. In terms of processing, specific enzymatic cleavages may yield mature proteins.

Its subcellular location is the cell membrane. Its function is as follows. The products of the Gag polyproteins of infectious retroviruses perform highly complex orchestrated tasks during the assembly, budding, maturation, and infection stages of the viral replication cycle. During viral assembly, the proteins form membrane associations and self-associations that ultimately result in budding of an immature virion from the infected cell. Gag precursors also function during viral assembly to selectively bind and package two plus strands of genomic RNA. Endogenous Gag proteins may have kept, lost or modified their original function during evolution. The protein is Endogenous retrovirus group K member 8 Gag polyprotein (ERVK-8) of Homo sapiens (Human).